The chain runs to 156 residues: SsrA-binding protein (156 aa).

It belongs to the SmpB family.

Its subcellular location is the cytoplasm. Functionally, required for rescue of stalled ribosomes mediated by trans-translation. Binds to transfer-messenger RNA (tmRNA), required for stable association of tmRNA with ribosomes. tmRNA and SmpB together mimic tRNA shape, replacing the anticodon stem-loop with SmpB. tmRNA is encoded by the ssrA gene; the 2 termini fold to resemble tRNA(Ala) and it encodes a 'tag peptide', a short internal open reading frame. During trans-translation Ala-aminoacylated tmRNA acts like a tRNA, entering the A-site of stalled ribosomes, displacing the stalled mRNA. The ribosome then switches to translate the ORF on the tmRNA; the nascent peptide is terminated with the 'tag peptide' encoded by the tmRNA and targeted for degradation. The ribosome is freed to recommence translation, which seems to be the essential function of trans-translation. The chain is SsrA-binding protein from Staphylococcus epidermidis (strain ATCC 35984 / DSM 28319 / BCRC 17069 / CCUG 31568 / BM 3577 / RP62A).